The primary structure comprises 427 residues: Trigger factor (427 aa).

The 86-residue stretch at 163 to 248 folds into the PPIase FKBP-type domain; the sequence is GDTVILDFEG…LHEIKTKEVP (86 aa).

Belongs to the FKBP-type PPIase family. Tig subfamily.

The protein resides in the cytoplasm. The catalysed reaction is [protein]-peptidylproline (omega=180) = [protein]-peptidylproline (omega=0). Its function is as follows. Involved in protein export. Acts as a chaperone by maintaining the newly synthesized protein in an open conformation. Functions as a peptidyl-prolyl cis-trans isomerase. The chain is Trigger factor from Listeria innocua serovar 6a (strain ATCC BAA-680 / CLIP 11262).